The following is a 539-amino-acid chain: MAGDGVENAKPPQKQEDLQPHPVKDQLYGITYCLTSPPPWPETILLGFQHYLVMLGTTVLIPTMLVSKIDARNEDKVKLIQTLLFVSGINTLFQSFFGTRLPAVIGASYSYVPTTMSIVLAARYNDIMDPQKRFEQIMRGIQGALIIASFLHILVGFSGLWRNVTRFLSPLSAVPLVAFSGFGLYEQGFPMLAKCIEIGLPEIILLVIFSQYIPHLMQGETCSNFFHRFAVIFSVVIVWLYAYILTIGGAYSNTEINTQISCRTDRAGIISASPWIRVPHPIQWGGAPTFNAGDIFAMMAASFVSLVESTGTYIAVSRYASATPIPPSVLSRGIGWQGFGILLCGLFGAGNATSVSVENAGLLAVTRVGSRRVIQVAAGFMIFFSILGKFGAIFASIPAPIVAALYCLFFSYVGAGGLSLIQFCNLNSFRTKFILGFSIFMGLSIPQYFYQYTTLETYGPVRTSATWFNNIINVPFSSKAFVSGILAFFLDTTLPPKDKTTKKDRGLVWWKRFKSFQSDNRSEEFYSLPLNLSKYFPSH.

A disordered region spans residues 1-20; that stretch reads MAGDGVENAKPPQKQEDLQP. The next 12 membrane-spanning stretches (helical) occupy residues 44-64, 79-99, 101-121, 141-161, 167-187, 189-209, 229-249, 295-315, 368-388, 399-421, 433-453, and 470-490; these read ILLG…IPTM, LIQT…FFGT, LPAV…IVLA, IQGA…SGLW, FLSP…LYEQ, FPML…LVIF, FAVI…TIGG, IFAM…TYIA, VGSR…SILG, APIV…LSLI, FILG…YQYT, and NIIN…AFFL.

This sequence belongs to the nucleobase:cation symporter-2 (NCS2) (TC 2.A.40) family. In terms of tissue distribution, highly expressed in ovules, endosperm and embryo.

Its subcellular location is the cell membrane. The sequence is that of Nucleobase-ascorbate transporter 8 (NAT8) from Arabidopsis thaliana (Mouse-ear cress).